We begin with the raw amino-acid sequence, 174 residues long: Gamma-crystallin F (174 aa).

Beta/gamma crystallin 'Greek key' domains are found at residues 2–40 (GKIT…RVDS) and 41–83 (GCWM…HLIP). Residues 84–87 (HSSS) form a connecting peptide region. 2 consecutive Beta/gamma crystallin 'Greek key' domains span residues 88–128 (HRIR…HVIE) and 129–171 (GYWV…RRIM).

The protein belongs to the beta/gamma-crystallin family.

Crystallins are the dominant structural components of the vertebrate eye lens. The sequence is that of Gamma-crystallin F (Crygf) from Rattus norvegicus (Rat).